A 233-amino-acid polypeptide reads, in one-letter code: 7-cyano-7-deazaguanine synthase (233 aa).

Position 13–23 (13–23 (LSGGLDSTTCL)) interacts with ATP. Residues C197, C206, C209, and C212 each coordinate Zn(2+).

Belongs to the QueC family. Zn(2+) serves as cofactor.

The catalysed reaction is 7-carboxy-7-deazaguanine + NH4(+) + ATP = 7-cyano-7-deazaguanine + ADP + phosphate + H2O + H(+). It participates in purine metabolism; 7-cyano-7-deazaguanine biosynthesis. In terms of biological role, catalyzes the ATP-dependent conversion of 7-carboxy-7-deazaguanine (CDG) to 7-cyano-7-deazaguanine (preQ(0)). This chain is 7-cyano-7-deazaguanine synthase, found in Anaeromyxobacter sp. (strain Fw109-5).